The sequence spans 394 residues: DNA replication and repair protein RecF (394 aa).

An ATP-binding site is contributed by 30–37; the sequence is GRNGFGKT.

This sequence belongs to the RecF family.

Its subcellular location is the cytoplasm. In terms of biological role, the RecF protein is involved in DNA metabolism; it is required for DNA replication and normal SOS inducibility. RecF binds preferentially to single-stranded, linear DNA. It also seems to bind ATP. The protein is DNA replication and repair protein RecF of Corynebacterium glutamicum (strain ATCC 13032 / DSM 20300 / JCM 1318 / BCRC 11384 / CCUG 27702 / LMG 3730 / NBRC 12168 / NCIMB 10025 / NRRL B-2784 / 534).